Here is a 504-residue protein sequence, read N- to C-terminus: Peroxisomal catalase (504 aa).

Active-site residues include His63 and Asn136. Residue Tyr345 coordinates heme. Residues Asn502–Phe504 carry the Microbody targeting signal motif.

The protein belongs to the catalase family. The cofactor is heme.

It localises to the peroxisome matrix. It catalyses the reaction 2 H2O2 = O2 + 2 H2O. Catalyzes the degradation of hydrogen peroxide (H(2)O(2)) generated by peroxisomal oxidases to water and oxygen, thereby protecting cells from the toxic effects of hydrogen peroxide. This chain is Peroxisomal catalase (CTA1), found in Candida boidinii (Yeast).